The sequence spans 319 residues: Mitochondrial fission regulator 1-like-A (319 aa).

Positions 1 to 37 (MASLGAAAEPERNLFGKDEAEAYESPEGRRSGRKKRT) are disordered. Residues 9-30 (EPERNLFGKDEAEAYESPEGRR) are compositionally biased toward basic and acidic residues.

It belongs to the MTFR1 family.

Its subcellular location is the mitochondrion outer membrane. Mitochondrial protein required for adaptation of miochondrial dynamics to metabolic changes. Regulates mitochondrial morphology at steady state and mediates AMPK-dependent stress-induced mitochondrial fragmentation via the control of OPA1 levels. The polypeptide is Mitochondrial fission regulator 1-like-A (mtfr1l-a) (Xenopus laevis (African clawed frog)).